The following is a 639-amino-acid chain: UvrABC system protein C (639 aa).

The 78-residue stretch at 20–97 (ERSGVYRMFD…IKKFQPKFNI (78 aa)) folds into the GIY-YIG domain. Residues 207–242 (KELQENLSRKMEELSSQMRFEEAAEIRDRIKALSYV) form the UVR domain.

The protein belongs to the UvrC family. As to quaternary structure, interacts with UvrB in an incision complex.

It is found in the cytoplasm. Its function is as follows. The UvrABC repair system catalyzes the recognition and processing of DNA lesions. UvrC both incises the 5' and 3' sides of the lesion. The N-terminal half is responsible for the 3' incision and the C-terminal half is responsible for the 5' incision. In Rickettsia peacockii (strain Rustic), this protein is UvrABC system protein C.